The sequence spans 129 residues: Small ribosomal subunit protein uS9 (129 aa).

The interval 110-129 (VERKKYGKKKARKSFQFSKR) is disordered. Residues 114–129 (KYGKKKARKSFQFSKR) are compositionally biased toward basic residues.

The protein belongs to the universal ribosomal protein uS9 family.

In Chlorobaculum parvum (strain DSM 263 / NCIMB 8327) (Chlorobium vibrioforme subsp. thiosulfatophilum), this protein is Small ribosomal subunit protein uS9.